A 414-amino-acid chain; its full sequence is Cytochrome P450 GfsF (414 aa).

Positions 1–32 (MTDTTLVEAGDPAEDAPEWPMKRDTGCPFDPP) are disordered. The heme b site is built by H75, H107, R111, R303, H361, and C363.

It belongs to the cytochrome P450 family. In terms of assembly, monomer. Heme b serves as cofactor.

Its pathway is antibiotic biosynthesis. Functionally, involved in the synthesis of the 16-membered macrolide antibiotics FD-891 and FD-892. Consecutively catalyzes epoxidation of C8-C9 and then hydroxylation at C10 to convert 25-O-methyl-FD-892 to FD-891. Consecutively catalyzes epoxidation of C8-C9 and then hydroxylation at C10 to convert 8,9-epoxy-FD-892 to 25-O-demethyl-FD-891 as well as converting 25-oxo-FD-892 to 8,9-epoxy-25-oxo-FD-892 and 8,9-epoxy-10-hydroxy-25-oxo-FD-892. In vitro is furnished with P.putida putidaredoxin and putidaredoxin reductase to provide the required two-electron reduction. This Streptomyces halstedii protein is Cytochrome P450 GfsF.